Here is a 100-residue protein sequence, read N- to C-terminus: MRLSPVEKEKLFLFMAGELAKQRMDRGLKLNYPEAVAILSCYVLEGAREGKSVSELMKDGKHVLSTEDVMEGVPEMLEEIQVEATFPDGVKLVTIHEPIQ.

The protein belongs to the urease gamma subunit family. In terms of assembly, heterotrimer of UreA (gamma), UreB (beta) and UreC (alpha) subunits. Three heterotrimers associate to form the active enzyme.

The protein resides in the cytoplasm. The catalysed reaction is urea + 2 H2O + H(+) = hydrogencarbonate + 2 NH4(+). The protein operates within nitrogen metabolism; urea degradation; CO(2) and NH(3) from urea (urease route): step 1/1. In Halalkalibacterium halodurans (strain ATCC BAA-125 / DSM 18197 / FERM 7344 / JCM 9153 / C-125) (Bacillus halodurans), this protein is Urease subunit gamma.